Reading from the N-terminus, the 322-residue chain is NADH-quinone oxidoreductase subunit H (322 aa).

Helical transmembrane passes span 15–35 (FFKV…LSIV), 50–69 (NRVG…KILF), 81–101 (FIFV…IPII), 114–134 (IGIL…LFAG), 149–169 (ACVQ…GVVA), 186–206 (IWNV…GLAV), 237–257 (FFIG…TLFF), 265–285 (IPGC…FILI), and 302–322 (WKFC…LILV).

This sequence belongs to the complex I subunit 1 family. In terms of assembly, NDH-1 is composed of 13 different subunits. Subunits NuoA, H, J, K, L, M, N constitute the membrane sector of the complex.

The protein resides in the cell membrane. It catalyses the reaction a quinone + NADH + 5 H(+)(in) = a quinol + NAD(+) + 4 H(+)(out). Functionally, NDH-1 shuttles electrons from NADH, via FMN and iron-sulfur (Fe-S) centers, to quinones in the respiratory chain. The immediate electron acceptor for the enzyme in this species is believed to be ubiquinone. Couples the redox reaction to proton translocation (for every two electrons transferred, four hydrogen ions are translocated across the cytoplasmic membrane), and thus conserves the redox energy in a proton gradient. This subunit may bind ubiquinone. The protein is NADH-quinone oxidoreductase subunit H of Buchnera aphidicola subsp. Acyrthosiphon pisum (strain 5A).